Reading from the N-terminus, the 175-residue chain is Adenine phosphoribosyltransferase (175 aa).

It belongs to the purine/pyrimidine phosphoribosyltransferase family. Homodimer.

Its subcellular location is the cytoplasm. It catalyses the reaction AMP + diphosphate = 5-phospho-alpha-D-ribose 1-diphosphate + adenine. Its pathway is purine metabolism; AMP biosynthesis via salvage pathway; AMP from adenine: step 1/1. In terms of biological role, catalyzes a salvage reaction resulting in the formation of AMP, that is energically less costly than de novo synthesis. The polypeptide is Adenine phosphoribosyltransferase (Francisella tularensis subsp. holarctica (strain FTNF002-00 / FTA)).